Consider the following 278-residue polypeptide: Small ribosomal subunit protein uS3 (278 aa).

The KH type-2 domain occupies 39 to 107; the sequence is LRKAISKKYV…KVQLNIVEIS (69 aa). The disordered stretch occupies residues 255 to 278; the sequence is AEIPAEEKPKRVVKKAENITKEEE.

It belongs to the universal ribosomal protein uS3 family. Part of the 30S ribosomal subunit. Forms a tight complex with proteins S10 and S14.

In terms of biological role, binds the lower part of the 30S subunit head. Binds mRNA in the 70S ribosome, positioning it for translation. The chain is Small ribosomal subunit protein uS3 from Dehalococcoides mccartyi (strain CBDB1).